We begin with the raw amino-acid sequence, 389 residues long: Phospho-N-acetylmuramoyl-pentapeptide-transferase (389 aa).

11 helical membrane passes run 21-41 (YITMRAVLACATALLIGLVAG), 71-91 (TPTMGGALILIAVAISTLLWA), 97-117 (FVWVVLLVTFGFGWIGWMDDY), 134-154 (FFWQATIGLVAAVYLAFAVSA), 167-187 (WVSSGFAMPLPTRADLIVPFF), 190-210 (VSYPLGVLGFVALTWAVIVGT), 222-242 (GLAIMPTVMVGSALGIFAYVV), 259-279 (AAELMVLCAAIAGAGLAFLWF), 286-306 (VFMGDVGALALGGALGTIAVI), 311-331 (IVLFIMGGVFVVETLSVMMQV), and 366-386 (QVVVRFWIISMMLVLIGLSTL).

Belongs to the glycosyltransferase 4 family. MraY subfamily. The cofactor is Mg(2+).

The protein localises to the cell inner membrane. It carries out the reaction UDP-N-acetyl-alpha-D-muramoyl-L-alanyl-gamma-D-glutamyl-meso-2,6-diaminopimeloyl-D-alanyl-D-alanine + di-trans,octa-cis-undecaprenyl phosphate = di-trans,octa-cis-undecaprenyl diphospho-N-acetyl-alpha-D-muramoyl-L-alanyl-D-glutamyl-meso-2,6-diaminopimeloyl-D-alanyl-D-alanine + UMP. It functions in the pathway cell wall biogenesis; peptidoglycan biosynthesis. Its function is as follows. Catalyzes the initial step of the lipid cycle reactions in the biosynthesis of the cell wall peptidoglycan: transfers peptidoglycan precursor phospho-MurNAc-pentapeptide from UDP-MurNAc-pentapeptide onto the lipid carrier undecaprenyl phosphate, yielding undecaprenyl-pyrophosphoryl-MurNAc-pentapeptide, known as lipid I. The chain is Phospho-N-acetylmuramoyl-pentapeptide-transferase from Bordetella petrii (strain ATCC BAA-461 / DSM 12804 / CCUG 43448).